We begin with the raw amino-acid sequence, 247 residues long: Pyrroloquinoline-quinone synthase (247 aa).

Belongs to the PqqC family.

It carries out the reaction 6-(2-amino-2-carboxyethyl)-7,8-dioxo-1,2,3,4,7,8-hexahydroquinoline-2,4-dicarboxylate + 3 O2 = pyrroloquinoline quinone + 2 H2O2 + 2 H2O + H(+). Its pathway is cofactor biosynthesis; pyrroloquinoline quinone biosynthesis. Functionally, ring cyclization and eight-electron oxidation of 3a-(2-amino-2-carboxyethyl)-4,5-dioxo-4,5,6,7,8,9-hexahydroquinoline-7,9-dicarboxylic-acid to PQQ. In Rhizobium rhizogenes (strain K84 / ATCC BAA-868) (Agrobacterium radiobacter), this protein is Pyrroloquinoline-quinone synthase.